Consider the following 384-residue polypeptide: Cysteine protease ATG4B (384 aa).

The active-site Nucleophile is the cysteine 74. Active-site residues include aspartate 269 and histidine 271. Residues 379–382 (FEIL) carry the LIR motif.

The protein belongs to the peptidase C54 family.

It localises to the cytoplasm. It is found in the cytosol. Its subcellular location is the cytoplasmic vesicle. The protein localises to the autophagosome. The protein resides in the endoplasmic reticulum. It localises to the mitochondrion. It catalyses the reaction [protein]-C-terminal L-amino acid-glycyl-phosphatidylethanolamide + H2O = [protein]-C-terminal L-amino acid-glycine + a 1,2-diacyl-sn-glycero-3-phosphoethanolamine. The catalysed reaction is [protein]-C-terminal L-amino acid-glycyl-phosphatidylserine + H2O = [protein]-C-terminal L-amino acid-glycine + a 1,2-diacyl-sn-glycero-3-phospho-L-serine. Its function is as follows. Cysteine protease that plays a key role in autophagy by mediating both proteolytic activation and delipidation of ATG8 family proteins. Required for canonical autophagy (macroautophagy), non-canonical autophagy as well as for mitophagy. The protease activity is required for proteolytic activation of ATG8 family proteins: cleaves the C-terminal amino acid of ATG8 proteins to reveal a C-terminal glycine. Exposure of the glycine at the C-terminus is essential for ATG8 proteins conjugation to phosphatidylethanolamine (PE) and insertion to membranes, which is necessary for autophagy. Protease activity is also required to counteract formation of high-molecular weight conjugates of ATG8 proteins (ATG8ylation): acts as a deubiquitinating-like enzyme that removes ATG8 conjugated to other proteins, such as ATG3. In addition to the protease activity, also mediates delipidation of ATG8 family proteins. Catalyzes delipidation of PE-conjugated forms of ATG8 proteins during macroautophagy. Also involved in non-canonical autophagy, a parallel pathway involving conjugation of ATG8 proteins to single membranes at endolysosomal compartments, by catalyzing delipidation of ATG8 proteins conjugated to phosphatidylserine (PS). The sequence is that of Cysteine protease ATG4B from Xenopus laevis (African clawed frog).